Reading from the N-terminus, the 347-residue chain is G-protein coupled receptor homolog U12 (347 aa).

Helical transmembrane passes span 36–56 (GITL…MILY), 67–87 (FYVI…FFMT), 103–124 (LVYF…IIAT), 147–167 (IGIL…FVKT), 194–214 (IVFS…FYVI), and 236–256 (ILLL…ICEI). Residues Cys-101 and Cys-176 are joined by a disulfide bond. The segment at 321–347 (QKRKDSDASEHDQNSKSKASVEKNQPL) is disordered. A compositionally biased stretch (basic and acidic residues) spans 322–341 (KRKDSDASEHDQNSKSKASV).

Belongs to the G-protein coupled receptor 1 family.

It localises to the membrane. Functionally, probable G-protein coupled receptor. This is G-protein coupled receptor homolog U12 (U12) from Homo sapiens (Human).